The following is a 234-amino-acid chain: Leucyl/phenylalanyl-tRNA--protein transferase (234 aa).

It belongs to the L/F-transferase family.

The protein localises to the cytoplasm. It carries out the reaction N-terminal L-lysyl-[protein] + L-leucyl-tRNA(Leu) = N-terminal L-leucyl-L-lysyl-[protein] + tRNA(Leu) + H(+). It catalyses the reaction N-terminal L-arginyl-[protein] + L-leucyl-tRNA(Leu) = N-terminal L-leucyl-L-arginyl-[protein] + tRNA(Leu) + H(+). The enzyme catalyses L-phenylalanyl-tRNA(Phe) + an N-terminal L-alpha-aminoacyl-[protein] = an N-terminal L-phenylalanyl-L-alpha-aminoacyl-[protein] + tRNA(Phe). Its function is as follows. Functions in the N-end rule pathway of protein degradation where it conjugates Leu, Phe and, less efficiently, Met from aminoacyl-tRNAs to the N-termini of proteins containing an N-terminal arginine or lysine. The polypeptide is Leucyl/phenylalanyl-tRNA--protein transferase (Tolumonas auensis (strain DSM 9187 / NBRC 110442 / TA 4)).